A 264-amino-acid polypeptide reads, in one-letter code: Thymidylate synthase (264 aa).

R21 is a dUMP binding site. H51 is a binding site for (6R)-5,10-methylene-5,6,7,8-tetrahydrofolate. 126–127 (RR) contributes to the dUMP binding site. C146 acts as the Nucleophile in catalysis. Residues 166–169 (RSAD), N177, and 207–209 (HLY) each bind dUMP. Residue D169 coordinates (6R)-5,10-methylene-5,6,7,8-tetrahydrofolate. A263 serves as a coordination point for (6R)-5,10-methylene-5,6,7,8-tetrahydrofolate.

This sequence belongs to the thymidylate synthase family. Bacterial-type ThyA subfamily. Homodimer.

The protein resides in the cytoplasm. The catalysed reaction is dUMP + (6R)-5,10-methylene-5,6,7,8-tetrahydrofolate = 7,8-dihydrofolate + dTMP. Its pathway is pyrimidine metabolism; dTTP biosynthesis. In terms of biological role, catalyzes the reductive methylation of 2'-deoxyuridine-5'-monophosphate (dUMP) to 2'-deoxythymidine-5'-monophosphate (dTMP) while utilizing 5,10-methylenetetrahydrofolate (mTHF) as the methyl donor and reductant in the reaction, yielding dihydrofolate (DHF) as a by-product. This enzymatic reaction provides an intracellular de novo source of dTMP, an essential precursor for DNA biosynthesis. The chain is Thymidylate synthase from Mesorhizobium japonicum (strain LMG 29417 / CECT 9101 / MAFF 303099) (Mesorhizobium loti (strain MAFF 303099)).